Consider the following 95-residue polypeptide: Aspartyl/glutamyl-tRNA(Asn/Gln) amidotransferase subunit C (95 aa).

This sequence belongs to the GatC family. In terms of assembly, heterotrimer of A, B and C subunits.

The enzyme catalyses L-glutamyl-tRNA(Gln) + L-glutamine + ATP + H2O = L-glutaminyl-tRNA(Gln) + L-glutamate + ADP + phosphate + H(+). It catalyses the reaction L-aspartyl-tRNA(Asn) + L-glutamine + ATP + H2O = L-asparaginyl-tRNA(Asn) + L-glutamate + ADP + phosphate + 2 H(+). Functionally, allows the formation of correctly charged Asn-tRNA(Asn) or Gln-tRNA(Gln) through the transamidation of misacylated Asp-tRNA(Asn) or Glu-tRNA(Gln) in organisms which lack either or both of asparaginyl-tRNA or glutaminyl-tRNA synthetases. The reaction takes place in the presence of glutamine and ATP through an activated phospho-Asp-tRNA(Asn) or phospho-Glu-tRNA(Gln). In Methylorubrum extorquens (strain CM4 / NCIMB 13688) (Methylobacterium extorquens), this protein is Aspartyl/glutamyl-tRNA(Asn/Gln) amidotransferase subunit C.